The sequence spans 528 residues: Probable cyclic di-GMP phosphodiesterase PdeC (528 aa).

2 helical membrane-spanning segments follow: residues 14–34 (GIIF…FLWA) and 242–262 (HLIF…LLWL). An EAL domain is found at 268-520 (YLSPKRKLQR…VFMQWMEQLP (253 aa)).

It localises to the cell inner membrane. It carries out the reaction 3',3'-c-di-GMP + H2O = 5'-phosphoguanylyl(3'-&gt;5')guanosine + H(+). Phosphodiesterase (PDE) that catalyzes the hydrolysis of cyclic-di-GMP (c-di-GMP) to 5'-pGpG. Cyclic-di-GMP is a second messenger which controls cell surface-associated traits in bacteria. Overexpression reduces biofilm formation. The chain is Probable cyclic di-GMP phosphodiesterase PdeC from Escherichia coli (strain K12).